Consider the following 314-residue polypeptide: 2,3-dihydroxyphenylpropionate/2,3-dihydroxicinnamic acid 1,2-dioxygenase (314 aa).

Histidine 115 (proton donor) is an active-site residue. Catalysis depends on histidine 179, which acts as the Proton acceptor.

It belongs to the LigB/MhpB extradiol dioxygenase family. Homotetramer. Fe(2+) serves as cofactor.

The enzyme catalyses 3-(2,3-dihydroxyphenyl)propanoate + O2 = (2Z,4E)-2-hydroxy-6-oxonona-2,4-dienedioate + H(+). The catalysed reaction is (2E)-3-(2,3-dihydroxyphenyl)prop-2-enoate + O2 = (2Z,4E,7E)-2-hydroxy-6-oxonona-2,4,7-trienedioate + H(+). It participates in aromatic compound metabolism; 3-phenylpropanoate degradation. Its function is as follows. Catalyzes the non-heme iron(II)-dependent oxidative cleavage of 2,3-dihydroxyphenylpropionic acid and 2,3-dihydroxicinnamic acid into 2-hydroxy-6-ketononadienedioate and 2-hydroxy-6-ketononatrienedioate, respectively. This chain is 2,3-dihydroxyphenylpropionate/2,3-dihydroxicinnamic acid 1,2-dioxygenase, found in Klebsiella pneumoniae (strain 342).